The sequence spans 306 residues: Curved DNA-binding protein (306 aa).

A J domain is found at 5–69 (DYYAIMGVKP…QRRAEYDQMW (65 aa)).

The protein resides in the cytoplasm. It is found in the nucleoid. In terms of biological role, DNA-binding protein that preferentially recognizes a curved DNA sequence. It is probably a functional analog of DnaJ; displays overlapping activities with DnaJ, but functions under different conditions, probably acting as a molecular chaperone in an adaptive response to environmental stresses other than heat shock. Lacks autonomous chaperone activity; binds native substrates and targets them for recognition by DnaK. Its activity is inhibited by the binding of CbpM. This is Curved DNA-binding protein from Escherichia coli (strain 55989 / EAEC).